The sequence spans 162 residues: Shikimate kinase (162 aa).

11 to 16 lines the ATP pocket; the sequence is GSGKSS. Residue Ser-15 coordinates Mg(2+). 3 residues coordinate substrate: Asp-33, Arg-57, and Gly-80. An ATP-binding site is contributed by Arg-116. Arg-132 contacts substrate.

The protein belongs to the shikimate kinase family. In terms of assembly, monomer. It depends on Mg(2+) as a cofactor.

Its subcellular location is the cytoplasm. The enzyme catalyses shikimate + ATP = 3-phosphoshikimate + ADP + H(+). It functions in the pathway metabolic intermediate biosynthesis; chorismate biosynthesis; chorismate from D-erythrose 4-phosphate and phosphoenolpyruvate: step 5/7. In terms of biological role, catalyzes the specific phosphorylation of the 3-hydroxyl group of shikimic acid using ATP as a cosubstrate. This is Shikimate kinase from Helicobacter pylori (strain HPAG1).